Reading from the N-terminus, the 412-residue chain is Imidazolonepropionase (412 aa).

Histidine 76 and histidine 78 together coordinate Fe(3+). Positions 76 and 78 each coordinate Zn(2+). 4-imidazolone-5-propanoate is bound by residues arginine 85, tyrosine 148, and histidine 181. Tyrosine 148 contacts N-formimidoyl-L-glutamate. A Fe(3+)-binding site is contributed by histidine 242. Histidine 242 contributes to the Zn(2+) binding site. A 4-imidazolone-5-propanoate-binding site is contributed by glutamate 245. Residue aspartate 317 coordinates Fe(3+). Residue aspartate 317 coordinates Zn(2+). Residues asparagine 319 and glycine 321 each contribute to the N-formimidoyl-L-glutamate site. Residue serine 322 participates in 4-imidazolone-5-propanoate binding.

The protein belongs to the metallo-dependent hydrolases superfamily. HutI family. Zn(2+) serves as cofactor. The cofactor is Fe(3+).

The protein localises to the cytoplasm. It carries out the reaction 4-imidazolone-5-propanoate + H2O = N-formimidoyl-L-glutamate. It functions in the pathway amino-acid degradation; L-histidine degradation into L-glutamate; N-formimidoyl-L-glutamate from L-histidine: step 3/3. Its function is as follows. Catalyzes the hydrolytic cleavage of the carbon-nitrogen bond in imidazolone-5-propanoate to yield N-formimidoyl-L-glutamate. It is the third step in the universal histidine degradation pathway. This is Imidazolonepropionase from Staphylococcus aureus (strain USA300 / TCH1516).